An 85-amino-acid polypeptide reads, in one-letter code: uncharacterized protein (85 aa).

To A.fulgidus AF_0255 and AF_1363.

This is an uncharacterized protein from Archaeoglobus fulgidus (strain ATCC 49558 / DSM 4304 / JCM 9628 / NBRC 100126 / VC-16).